Here is a 100-residue protein sequence, read N- to C-terminus: Aspartyl/glutamyl-tRNA(Asn/Gln) amidotransferase subunit C (100 aa).

This sequence belongs to the GatC family. In terms of assembly, heterotrimer of A, B and C subunits.

It carries out the reaction L-glutamyl-tRNA(Gln) + L-glutamine + ATP + H2O = L-glutaminyl-tRNA(Gln) + L-glutamate + ADP + phosphate + H(+). It catalyses the reaction L-aspartyl-tRNA(Asn) + L-glutamine + ATP + H2O = L-asparaginyl-tRNA(Asn) + L-glutamate + ADP + phosphate + 2 H(+). Allows the formation of correctly charged Asn-tRNA(Asn) or Gln-tRNA(Gln) through the transamidation of misacylated Asp-tRNA(Asn) or Glu-tRNA(Gln) in organisms which lack either or both of asparaginyl-tRNA or glutaminyl-tRNA synthetases. The reaction takes place in the presence of glutamine and ATP through an activated phospho-Asp-tRNA(Asn) or phospho-Glu-tRNA(Gln). The chain is Aspartyl/glutamyl-tRNA(Asn/Gln) amidotransferase subunit C from Staphylococcus saprophyticus subsp. saprophyticus (strain ATCC 15305 / DSM 20229 / NCIMB 8711 / NCTC 7292 / S-41).